The primary structure comprises 591 residues: DDB1- and CUL4-associated factor 8 (591 aa).

The segment covering 1–14 (MSSKRPSTDGRRDL) has biased composition (basic and acidic residues). A disordered region spans residues 1–140 (MSSKRPSTDG…EDWVSSETTA (140 aa)). Phosphoserine is present on residues serine 21 and serine 22. The Nuclear export signal signature appears at 39–50 (IEVEASDLSLSL). Composition is skewed to basic and acidic residues over residues 65–99 (RGTD…HGHS) and 118–131 (SRDQ…RALE). Phosphoserine occurs at positions 99, 123, and 124. WD repeat units follow at residues 185–224 (GHTG…PVLD), 228–269 (GHKS…CCKN), 275–315 (QHKG…PASK), 323–363 (EKKV…ENEN), 379–418 (ESKA…GAQY), 426–466 (RNNA…IIQF), and 470–509 (DKGG…STEL). Position 198 is an omega-N-methylarginine; by PRMT1 (arginine 198). The interval 552–591 (HRRWREPGVGATDADSDESPSSSDTSDEEEGPDRVQCMPS) is disordered.

This sequence belongs to the WD repeat DCAF8 family. Interacts with DDB1, CUL4A and CUL4B. Interacts with KPNA1, KPNB1 and XPO1.

It localises to the nucleus. It is found in the cytoplasm. The protein operates within protein modification; protein ubiquitination. In terms of biological role, may function as a substrate receptor for CUL4-DDB1 E3 ubiquitin-protein ligase complex. This is DDB1- and CUL4-associated factor 8 (Dcaf8) from Rattus norvegicus (Rat).